The chain runs to 345 residues: UDP-N-acetylenolpyruvoylglucosamine reductase (345 aa).

The FAD-binding PCMH-type domain maps to 16-186 (LPAYASNVIS…VSVGIKLMKS (171 aa)). Arg-162 is an active-site residue. The active-site Proton donor is Ser-232. Glu-328 is an active-site residue.

Belongs to the MurB family. Requires FAD as cofactor.

It localises to the cytoplasm. It catalyses the reaction UDP-N-acetyl-alpha-D-muramate + NADP(+) = UDP-N-acetyl-3-O-(1-carboxyvinyl)-alpha-D-glucosamine + NADPH + H(+). It participates in cell wall biogenesis; peptidoglycan biosynthesis. Its function is as follows. Cell wall formation. In Yersinia pestis, this protein is UDP-N-acetylenolpyruvoylglucosamine reductase.